Here is a 117-residue protein sequence, read N- to C-terminus: Small ribosomal subunit protein bS16 (117 aa).

Residues 81–90 show a composition bias toward basic residues; the sequence is LKKRPNRNNP. Residues 81–117 are disordered; it reads LKKRPNRNNPHKGQPGKKAQERISAAKQVAEAESAPV.

It belongs to the bacterial ribosomal protein bS16 family.

The polypeptide is Small ribosomal subunit protein bS16 (Bartonella quintana (strain Toulouse) (Rochalimaea quintana)).